A 677-amino-acid polypeptide reads, in one-letter code: Penicillin-binding protein activator LpoA (677 aa).

The signal sequence occupies residues methionine 1–alanine 26. Residue cysteine 27 is the site of N-palmitoyl cysteine attachment. The S-diacylglycerol cysteine moiety is linked to residue cysteine 27. Positions glutamine 309–tyrosine 359 are disordered. The span at alanine 313–glutamine 355 shows a compositional bias: low complexity.

This sequence belongs to the LpoA family. In terms of assembly, interacts with PBP1a.

The protein resides in the cell outer membrane. Functionally, regulator of peptidoglycan synthesis that is essential for the function of penicillin-binding protein 1A (PBP1a). The sequence is that of Penicillin-binding protein activator LpoA from Pantoea ananatis (strain LMG 20103).